The sequence spans 625 residues: Coagulation factor XI (625 aa).

Residues 1 to 18 form the signal peptide; sequence MIFLYQVVHFILFTSVSG. 4 Apple domains span residues 20–103, 110–193, 200–283, and 291–374; these read CVTQ…FKQC, CNKD…LKSC, CIRD…LQSC, and CHSS…LRLC. Intrachain disulfides connect Cys20–Cys103, Cys46–Cys76, Cys50–Cys56, Cys110–Cys193, Cys136–Cys165, Cys140–Cys146, Cys200–Cys283, Cys226–Cys255, Cys230–Cys236, Cys291–Cys374, Cys317–Cys346, Cys321–Cys327, Cys380–Cys500, Cys416–Cys432, Cys514–Cys581, Cys545–Cys560, and Cys571–Cys599. Asn90 and Asn126 each carry an N-linked (GlcNAc...) (complex) asparagine glycan. Asn163 carries an N-linked (GlcNAc...) (complex) asparagine; atypical glycan. The Peptidase S1 domain occupies 388-623; the sequence is IVGGTASVRG…YVDWILEKTQ (236 aa). His431 (charge relay system) is an active-site residue. Residue Asn450 is glycosylated (N-linked (GlcNAc...) (complex) asparagine). Asp480 (charge relay system) is an active-site residue. Residue Asn491 is glycosylated (N-linked (GlcNAc...) (complex) asparagine). Residue 547–550 coordinates heparin; sequence KRYR. Catalysis depends on Ser575, which acts as the Charge relay system.

This sequence belongs to the peptidase S1 family. Plasma kallikrein subfamily. As to quaternary structure, homodimer; disulfide-linked. Can form non-covalently bonded homodimers. After activation the heavy and light chains are also linked by a disulfide bond. Interacts (activated) with F9 (inactive and activated) in calcium-dependent manner. Forms a heterodimer with SERPINA5. Interacts with Anopheles gambiae D7L2. Interacts (activated) with guianensin, an anticoagulant protein from Simulium guianense saliva. In terms of processing, N-glycosylated on both chains. N-glycosylated sites mainly consist of nonfucosylated sialylated biantennary (in high abundance) and/or triantennary (in low abundance) complex structures. Glycosylation at Asn-163 uses a rare non-canonical Asn-X-Cys glycosite. Post-translationally, activated by factor XIIa (or XII), which cleaves each polypeptide after Arg-387 into the light chain, which contains the active site, and the heavy chain, which associates with high molecular weight (HMW) kininogen. Activated by F12 (activated); the presence of negatively charged surfaces accelerates activation. Activated by F2 (thrombin); the presence of negatively charged surfaces, such as polyphosphate and dextran sulfate, strongly accelerates activation. Autoactivated; the presence of negatively charged surfaces, such as polyphosphate and dextran sulfate, accelerates autoactivation and autolysis. Isoform 2 is produced by platelets and megakaryocytes but absent from other blood cells.

Its subcellular location is the secreted. The enzyme catalyses Selective cleavage of Arg-|-Ala and Arg-|-Val bonds in factor IX to form factor IXa.. Its activity is regulated as follows. Inhibited by SERPINA5. Functionally, factor XI triggers the middle phase of the intrinsic pathway of blood coagulation by activating factor IX. The sequence is that of Coagulation factor XI (F11) from Homo sapiens (Human).